Reading from the N-terminus, the 304-residue chain is Uricase (304 aa).

Ala-2 carries the N-acetylalanine modification. Lys-10 and Lys-23 each carry N6-acetyllysine; alternate. An N6-succinyllysine; alternate mark is found at Lys-10 and Lys-23. The active-site Charge relay system is Lys-23. Lys-27 and Lys-36 each carry N6-acetyllysine. Ser-39 and Ser-63 each carry phosphoserine. Thr-68 functions as the Charge relay system in the catalytic mechanism. Residues Thr-68 and Asp-69 each coordinate urate. N6-acetyllysine occurs at positions 118, 122, and 164. Residue Phe-170 participates in urate binding. N6-acetyllysine is present on residues Lys-175 and Lys-185. Residue Arg-187 coordinates urate. Lys-221 and Lys-228 each carry N6-acetyllysine; alternate. N6-succinyllysine; alternate occurs at positions 221 and 228. Ser-232 is modified (phosphoserine). Urate contacts are provided by Val-235, Gln-236, and Asn-262. His-264 acts as the Charge relay system in catalysis. At Lys-278 the chain carries N6-acetyllysine. Tyr-289 is modified (phosphotyrosine). The Microbody targeting signal motif lies at 302 to 304 (SRL).

The protein belongs to the uricase family.

It localises to the peroxisome. It carries out the reaction urate + O2 + H2O = 5-hydroxyisourate + H2O2. Its pathway is purine metabolism; urate degradation; (S)-allantoin from urate: step 1/3. Functionally, catalyzes the oxidation of uric acid to 5-hydroxyisourate, which is further processed to form (S)-allantoin. In Macaca fascicularis (Crab-eating macaque), this protein is Uricase (UOX).